A 405-amino-acid chain; its full sequence is Growth/differentiation factor 11 (405 aa).

A signal peptide spans 1–20 (MVLAAPLLLGFLLLALELRP). A propeptide spanning residues 21-296 (RGEAAEGPAA…VLENTKRSRR (276 aa)) is cleaved from the precursor. Residue N92 is glycosylated (N-linked (GlcNAc...) asparagine). 4 cysteine pairs are disulfide-bonded: C302/C312, C311/C370, C339/C402, and C343/C404.

The protein belongs to the TGF-beta family. In terms of assembly, homodimer; disulfide-linked. Interacts directly with ACVR2B. Interacts directly with ACVR2A. Interacts with ACVR1B, TGFBR1 and ACVR1C in an ACVR2B-dependent manner. Interacts with FST isoform 2/FS288. Synthesized as large precursor molecule that undergoes proteolytic cleavage by furin-like proteases. This produces an inactive form consisting of the mature C-terminal portion non-covalently bound to its cleaved N-terminal propeptide. Activation of the mature form requires additional cleavage of the propeptide by a tolloid-like metalloproteinase. As to expression, highly expressed in the developing limb bud, initially detected in the distal mesenchyme, and later localizing to regions around the developing bones. Is also expressed in adult dental pulp and brain.

It is found in the secreted. Its function is as follows. Secreted signal that acts globally to regulate anterior/posterior axial patterning during development. May play critical roles in patterning both mesodermal and neural tissues. It is required for proper vertebral patterning and orofacial development. Signals through activin receptors type-2, ACVR2A and ACVR2B, and activin receptors type-1, ACVR1B, ACVR1C and TGFBR1 leading to the phosphorylation of SMAD2 and SMAD3. The chain is Growth/differentiation factor 11 (Gdf11) from Mus musculus (Mouse).